The following is a 247-amino-acid chain: NH(3)-dependent NAD(+) synthetase (247 aa).

29–36 (GLSGGVDS) lines the ATP pocket. A Mg(2+)-binding site is contributed by Asp35. Arg112 serves as a coordination point for deamido-NAD(+). An ATP-binding site is contributed by Thr132. Glu137 lines the Mg(2+) pocket. 2 residues coordinate deamido-NAD(+): Lys145 and Asp152. ATP contacts are provided by Lys161 and Ser183. 233–234 (HK) lines the deamido-NAD(+) pocket.

This sequence belongs to the NAD synthetase family. In terms of assembly, homodimer.

It carries out the reaction deamido-NAD(+) + NH4(+) + ATP = AMP + diphosphate + NAD(+) + H(+). Its pathway is cofactor biosynthesis; NAD(+) biosynthesis; NAD(+) from deamido-NAD(+) (ammonia route): step 1/1. Its function is as follows. Catalyzes the ATP-dependent amidation of deamido-NAD to form NAD. Uses ammonia as a nitrogen source. This Archaeoglobus fulgidus (strain ATCC 49558 / DSM 4304 / JCM 9628 / NBRC 100126 / VC-16) protein is NH(3)-dependent NAD(+) synthetase.